Consider the following 130-residue polypeptide: Small ribosomal subunit protein uS11 (130 aa).

It belongs to the universal ribosomal protein uS11 family. Part of the 30S ribosomal subunit. Interacts with proteins S7 and S18. Binds to IF-3.

Its function is as follows. Located on the platform of the 30S subunit, it bridges several disparate RNA helices of the 16S rRNA. Forms part of the Shine-Dalgarno cleft in the 70S ribosome. The polypeptide is Small ribosomal subunit protein uS11 (Campylobacter fetus subsp. fetus (strain 82-40)).